A 282-amino-acid polypeptide reads, in one-letter code: Putative sugar uptake protein lp_2594 (282 aa).

Transmembrane regions (helical) follow at residues 2-21 (IFLIAIIPALCWGINPLLVG), 31-48 (MFGMGIGDGLIALIFWLF), 53-75 (VTISGVTFGLAMISGAAWAIGQL), 90-112 (MPISTALQLVGTSLIGVLMFGEW), 119-136 (ILGLLAIMLIVAGSALSA), 146-163 (FSCYLPLLMTTIGYWIYS), 176-194 (LFLPQMLGILIVAVGWAIY), 209-226 (TLPGILYGIAAFMYILSA), 233-252 (NAYIIGQLSVVISTLSGLFF), and 262-281 (IVSVATGLLFIFMGCVTTAL).

The protein belongs to the GRP transporter (TC 2.A.7.5) family.

Its subcellular location is the cell membrane. The polypeptide is Putative sugar uptake protein lp_2594 (Lactiplantibacillus plantarum (strain ATCC BAA-793 / NCIMB 8826 / WCFS1) (Lactobacillus plantarum)).